Reading from the N-terminus, the 338-residue chain is tRNA N6-adenosine threonylcarbamoyltransferase (338 aa).

Residues H110 and H114 each coordinate Fe cation. Substrate contacts are provided by residues 132 to 136 (LLSGG), D165, G178, and N274. Position 298 (D298) interacts with Fe cation.

This sequence belongs to the KAE1 / TsaD family. Fe(2+) serves as cofactor.

It is found in the cytoplasm. It catalyses the reaction L-threonylcarbamoyladenylate + adenosine(37) in tRNA = N(6)-L-threonylcarbamoyladenosine(37) in tRNA + AMP + H(+). In terms of biological role, required for the formation of a threonylcarbamoyl group on adenosine at position 37 (t(6)A37) in tRNAs that read codons beginning with adenine. Is involved in the transfer of the threonylcarbamoyl moiety of threonylcarbamoyl-AMP (TC-AMP) to the N6 group of A37, together with TsaE and TsaB. TsaD likely plays a direct catalytic role in this reaction. This Borrelia garinii subsp. bavariensis (strain ATCC BAA-2496 / DSM 23469 / PBi) (Borreliella bavariensis) protein is tRNA N6-adenosine threonylcarbamoyltransferase.